The sequence spans 247 residues: Ribosomal RNA processing protein 36 homolog (247 aa).

Disordered regions lie at residues 1–29, 62–89, 136–188, and 218–247; these read MDNQ…HLKD, RTQG…QRVP, SVEK…RELV, and GKLQ…QVDQ. Residues 8 to 23 show a composition bias toward acidic residues; the sequence is SSDDESPTDDCSDEGE. Basic and acidic residues-rich tracts occupy residues 136 to 153 and 164 to 174; these read SVEK…RKNL and ERSRKSAEAKR. A compositionally biased stretch (basic residues) spans 218–240; the sequence is GKLQKYLTKRRKKTASKDRRHVP.

Belongs to the RRP36 family.

It localises to the nucleus. The protein localises to the nucleolus. Its function is as follows. Involved in the early processing steps of the pre-rRNA in the maturation pathway leading to the 18S rRNA. The chain is Ribosomal RNA processing protein 36 homolog from Nematostella vectensis (Starlet sea anemone).